The sequence spans 136 residues: Histone H3.3C (136 aa).

The interval 1–44 is disordered; the sequence is MARTKQTARKSTGGKAPRKQLVTKAARKSAPSTGGMKKPHRYRP. The residue at position 3 (arginine 3) is an Asymmetric dimethylarginine; by PRMT6; alternate. The residue at position 3 (arginine 3) is a Citrulline; alternate. Residue threonine 4 is modified to Phosphothreonine; by HASPIN. The residue at position 5 (lysine 5) is an Allysine; alternate. Position 5 is an N6,N6,N6-trimethyllysine; alternate (lysine 5). Residue lysine 5 is modified to N6,N6-dimethyllysine; alternate. Lysine 5 bears the N6-(2-hydroxyisobutyryl)lysine; alternate mark. Residue lysine 5 is modified to N6-(beta-hydroxybutyryl)lysine; alternate. Lysine 5 is modified (N6-acetyllysine; alternate). Position 5 is an N6-methyllysine; alternate (lysine 5). Glutamine 6 carries the 5-glutamyl dopamine; alternate modification. Glutamine 6 carries the 5-glutamyl serotonin; alternate modification. Threonine 7 is subject to Phosphothreonine; by PKC. The residue at position 9 (arginine 9) is a Symmetric dimethylarginine. Position 10 is an N6,N6,N6-trimethyllysine; alternate (lysine 10). Position 10 is an N6,N6-dimethyllysine; alternate (lysine 10). Lysine 10 is modified (N6-(2-hydroxyisobutyryl)lysine; alternate). Lysine 10 carries the post-translational modification N6-(beta-hydroxybutyryl)lysine; alternate. An N6-acetyllysine; alternate modification is found at lysine 10. Lysine 10 carries the post-translational modification N6-methyllysine; alternate. Lysine 10 bears the N6-lactoyllysine; alternate mark. Serine 11 is subject to ADP-ribosylserine; alternate. Phosphoserine; alternate; by AURKB, AURKC, RPS6KA3, RPS6KA4 and RPS6KA5 is present on serine 11. A Phosphothreonine; by PKC modification is found at threonine 12. An N6-(2-hydroxyisobutyryl)lysine; alternate modification is found at lysine 15. An N6-(beta-hydroxybutyryl)lysine; alternate modification is found at lysine 15. An N6-acetyllysine; alternate modification is found at lysine 15. Lysine 15 carries the N6-lactoyllysine; alternate modification. Lysine 15 carries the N6-glutaryllysine; alternate modification. Lysine 15 is modified (N6-succinyllysine; alternate). At arginine 18 the chain carries Asymmetric dimethylarginine. N6-(2-hydroxyisobutyryl)lysine; alternate occurs at positions 19 and 24. N6-(beta-hydroxybutyryl)lysine; alternate is present on residues lysine 19 and lysine 24. An N6-acetyllysine; alternate mark is found at lysine 19 and lysine 24. Residues lysine 19 and lysine 24 each carry the N6-methyllysine; alternate modification. Lysine 19 and lysine 24 each carry N6-lactoyllysine; alternate. N6-glutaryllysine; alternate is present on residues lysine 19 and lysine 24. Residues lysine 19 and lysine 24 each carry the N6-butyryllysine; alternate modification. Residue arginine 27 is modified to Citrulline. The residue at position 28 (lysine 28) is an N6,N6,N6-trimethyllysine; alternate. At lysine 28 the chain carries N6,N6-dimethyllysine; alternate. Lysine 28 is subject to N6-(2-hydroxyisobutyryl)lysine; alternate. An N6-acetyllysine; alternate modification is found at lysine 28. Lysine 28 is subject to N6-methyllysine; alternate. At lysine 28 the chain carries N6-lactoyllysine; alternate. At lysine 28 the chain carries N6-glutaryllysine; alternate. ADP-ribosylserine; alternate is present on serine 29. Serine 29 carries the post-translational modification Phosphoserine; alternate; by AURKB, AURKC and RPS6KA5. A Phosphoserine modification is found at serine 32. Lysine 37 carries the N6,N6,N6-trimethyllysine; alternate modification. An N6,N6-dimethyllysine; alternate modification is found at lysine 37. Lysine 37 carries the post-translational modification N6-(2-hydroxyisobutyryl)lysine; alternate. N6-acetyllysine; alternate is present on lysine 37. Position 37 is an N6-methyllysine; alternate (lysine 37). Position 38 is an N6-methyllysine (lysine 38). Tyrosine 42 carries the post-translational modification Phosphotyrosine. The residue at position 57 (lysine 57) is an N6,N6,N6-trimethyllysine; alternate. An N6-(2-hydroxyisobutyryl)lysine; alternate modification is found at lysine 57. Lysine 57 carries the post-translational modification N6-(beta-hydroxybutyryl)lysine; alternate. Lysine 57 bears the N6-acetyllysine; alternate mark. Position 57 is an N6-methyllysine; alternate (lysine 57). Lysine 57 bears the N6-lactoyllysine; alternate mark. Lysine 57 bears the N6-glutaryllysine; alternate mark. Lysine 57 carries the N6-succinyllysine; alternate modification. At serine 58 the chain carries Phosphoserine. Lysine 65 and lysine 80 each carry N6-(2-hydroxyisobutyryl)lysine; alternate. An N6-methyllysine; alternate mark is found at lysine 65 and lysine 80. Lysine 80 carries the N6,N6,N6-trimethyllysine; alternate modification. Lysine 80 bears the N6,N6-dimethyllysine; alternate mark. Lysine 80 carries the post-translational modification N6-acetyllysine; alternate. Lysine 80 carries the post-translational modification N6-lactoyllysine; alternate. Lysine 80 carries the post-translational modification N6-glutaryllysine; alternate. Lysine 80 carries the post-translational modification N6-succinyllysine; alternate. Position 81 is a phosphothreonine (threonine 81). Serine 87 carries the phosphoserine modification. Threonine 108 bears the Phosphothreonine mark. Lysine 116 is subject to N6-acetyllysine; alternate. An N6-glutaryllysine; alternate modification is found at lysine 116.

Belongs to the histone H3 family. The nucleosome is a histone octamer containing two molecules each of H2A, H2B, H3 and H4 assembled in one H3-H4 heterotetramer and two H2A-H2B heterodimers. The octamer wraps approximately 147 bp of DNA. In terms of processing, acetylation is generally linked to gene activation. Acetylation on Lys-19 (H3K18ac) favors methylation at Arg-18 (H3R17me). Post-translationally, citrullination at Arg-18 by PADI4 impairs methylation and represses transcription. Asymmetric dimethylation at Arg-18 (H3R17me2a) by CARM1 is linked to gene activation. Asymmetric dimethylation at Arg-3 (H3R2me2a) by PRMT6 is linked to gene repression and is mutually exclusive with H3 Lys-5 methylation (H3K4me2 and H3K4me3). H3R2me2a is present at the 3' of genes regardless of their transcription state and is enriched on inactive promoters, while it is absent on active promoters. In terms of processing, methylation at Lys-5 (H3K4me) and Lys-80 (H3K79me) are linked to gene activation. Methylation at Lys-5 (H3K4me) facilitates subsequent acetylation of H3 and H4. Methylation at Lys-80 (H3K79me) is associated with DNA double-strand break (DSB) responses and is a specific target for TP53BP1. Methylation at Lys-10 (H3K9me) and Lys-28 (H3K27me) are linked to gene repression. Methylation at Lys-10 (H3K9me) is a specific target for HP1 proteins (CBX1, CBX3 and CBX5) and prevents subsequent phosphorylation at Ser-11 (H3S10ph) and acetylation of H3 and H4. Methylation at Lys-5 (H3K4me) and Lys-80 (H3K79me) require preliminary monoubiquitination of H2B at 'Lys-120'. Methylation at Lys-10 (H3K9me) and Lys-28 (H3K27me) are enriched in inactive X chromosome chromatin. Monomethylation at Lys-57 (H3K56me1) by EHMT2/G9A in G1 phase promotes interaction with PCNA and is required for DNA replication. Post-translationally, phosphorylated at Thr-4 (H3T3ph) by HASPIN during prophase and dephosphorylated during anaphase. Phosphorylation at Ser-11 (H3S10ph) by AURKB is crucial for chromosome condensation and cell-cycle progression during mitosis and meiosis. In addition phosphorylation at Ser-11 (H3S10ph) by RPS6KA4 and RPS6KA5 is important during interphase because it enables the transcription of genes following external stimulation, like mitogens, stress, growth factors or UV irradiation and result in the activation of genes, such as c-fos and c-jun. Phosphorylation at Ser-11 (H3S10ph), which is linked to gene activation, prevents methylation at Lys-10 (H3K9me) but facilitates acetylation of H3 and H4. Phosphorylation at Ser-11 (H3S10ph) by AURKB mediates the dissociation of HP1 proteins (CBX1, CBX3 and CBX5) from heterochromatin. Phosphorylation at Ser-11 (H3S10ph) is also an essential regulatory mechanism for neoplastic cell transformation. Phosphorylated at Ser-29 (H3S28ph) by MAP3K20 isoform 1, RPS6KA5 or AURKB during mitosis or upon ultraviolet B irradiation. Phosphorylation at Thr-7 (H3T6ph) by PRKCB is a specific tag for epigenetic transcriptional activation that prevents demethylation of Lys-5 (H3K4me) by LSD1/KDM1A. At centromeres, specifically phosphorylated at Thr-12 (H3T11ph) from prophase to early anaphase, by DAPK3 and PKN1. Phosphorylation at Thr-12 (H3T11ph) by PKN1 or isoform M2 of PKM (PKM2) is a specific tag for epigenetic transcriptional activation that promotes demethylation of Lys-10 (H3K9me) by KDM4C/JMJD2C. Phosphorylation at Tyr-42 (H3Y41ph) by JAK2 promotes exclusion of CBX5 (HP1 alpha) from chromatin. Lysine deamination at Lys-5 (H3K4all) to form allysine is mediated by LOXL2. Allysine formation by LOXL2 only takes place on H3K4me3 and results in gene repression. In terms of processing, butyrylation of histones marks active promoters and competes with histone acetylation. It is present during late spermatogenesis. Post-translationally, succinylation at Lys-80 (H3K79succ) by KAT2A takes place with a maximum frequency around the transcription start sites of genes. It gives a specific tag for epigenetic transcription activation. Serine ADP-ribosylation constitutes the primary form of ADP-ribosylation of proteins in response to DNA damage. Serine ADP-ribosylation at Ser-11 (H3S10ADPr) is mutually exclusive with phosphorylation at Ser-11 (H3S10ph) and impairs acetylation at Lys-10 (H3K9ac).

The protein resides in the nucleus. It is found in the chromosome. Its function is as follows. Core component of nucleosome. Nucleosomes wrap and compact DNA into chromatin, limiting DNA accessibility to the cellular machineries which require DNA as a template. Histones thereby play a central role in transcription regulation, DNA repair, DNA replication and chromosomal stability. DNA accessibility is regulated via a complex set of post-translational modifications of histones, also called histone code, and nucleosome remodeling. The polypeptide is Histone H3.3C (Bos taurus (Bovine)).